A 197-amino-acid polypeptide reads, in one-letter code: Peptide deformylase (197 aa).

Residues Cys-106 and His-148 each contribute to the Fe cation site. The active site involves Glu-149. His-152 is a Fe cation binding site.

This sequence belongs to the polypeptide deformylase family. It depends on Fe(2+) as a cofactor.

The enzyme catalyses N-terminal N-formyl-L-methionyl-[peptide] + H2O = N-terminal L-methionyl-[peptide] + formate. Removes the formyl group from the N-terminal Met of newly synthesized proteins. Requires at least a dipeptide for an efficient rate of reaction. N-terminal L-methionine is a prerequisite for activity but the enzyme has broad specificity at other positions. In Mycobacterium sp. (strain JLS), this protein is Peptide deformylase.